A 519-amino-acid polypeptide reads, in one-letter code: Glycogen synthase (519 aa).

The segment at 1 to 40 (MISAAVEPHVDAFKPDNREPLTPDFATTGKAPGAQRQHNP) is disordered. The span at 8 to 21 (PHVDAFKPDNREPL) shows a compositional bias: basic and acidic residues. Lysine 57 lines the ADP-alpha-D-glucose pocket.

The protein belongs to the glycosyltransferase 1 family. Bacterial/plant glycogen synthase subfamily.

It catalyses the reaction [(1-&gt;4)-alpha-D-glucosyl](n) + ADP-alpha-D-glucose = [(1-&gt;4)-alpha-D-glucosyl](n+1) + ADP + H(+). It functions in the pathway glycan biosynthesis; glycogen biosynthesis. In terms of biological role, synthesizes alpha-1,4-glucan chains using ADP-glucose. This is Glycogen synthase from Pseudomonas putida (strain ATCC 47054 / DSM 6125 / CFBP 8728 / NCIMB 11950 / KT2440).